The chain runs to 476 residues: GTPase Der (476 aa).

2 EngA-type G domains span residues 3–167 (FTVA…GEER) and 205–380 (LRVA…KVWN). Residues 9–16 (GRPNVGKS), 56–60 (DTAGL), 119–122 (NKSE), 211–218 (GRPNAGKS), 258–262 (DTAGM), and 323–326 (NKWD) each bind GTP. Residues 381–465 (RRISTARLNR…PIRVHFRASE (85 aa)) form the KH-like domain.

Belongs to the TRAFAC class TrmE-Era-EngA-EngB-Septin-like GTPase superfamily. EngA (Der) GTPase family. In terms of assembly, associates with the 50S ribosomal subunit.

Its function is as follows. GTPase that plays an essential role in the late steps of ribosome biogenesis. This Rhizobium meliloti (strain 1021) (Ensifer meliloti) protein is GTPase Der.